We begin with the raw amino-acid sequence, 943 residues long: Translation initiation factor IF-2 (943 aa).

The segment at 29 to 349 (LSVKSHSSSV…NNRGNSAPKL (321 aa)) is disordered. Composition is skewed to basic and acidic residues over residues 69 to 82 (PKEE…DKAS), 112 to 137 (FKAE…DNRN), 145 to 155 (QGKRHNNDRRN), 163 to 196 (DHNK…RDNA), and 224 to 253 (RQSE…EKQQ). A compositionally biased stretch (low complexity) spans 254–266 (AEVAVQKAAAETK). The segment covering 296-309 (KSRDNHRVNEDGPK) has biased composition (basic and acidic residues). The segment covering 313 to 332 (NNKWNNQNQVRNQRNSNWNK) has biased composition (low complexity). In terms of domain architecture, tr-type G spans 445–614 (ERAPVVTIMG…LLVAEVEELK (170 aa)). Residues 454 to 461 (GHVDHGKT) form a G1 region. A GTP-binding site is contributed by 454–461 (GHVDHGKT). Residues 479–483 (GITQH) form a G2 region. A G3 region spans residues 500–503 (DTPG). GTP-binding positions include 500-504 (DTPGH) and 554-557 (NKID). Positions 554–557 (NKID) are G4. The G5 stretch occupies residues 590-592 (SAK).

The protein belongs to the TRAFAC class translation factor GTPase superfamily. Classic translation factor GTPase family. IF-2 subfamily.

It localises to the cytoplasm. In terms of biological role, one of the essential components for the initiation of protein synthesis. Protects formylmethionyl-tRNA from spontaneous hydrolysis and promotes its binding to the 30S ribosomal subunits. Also involved in the hydrolysis of GTP during the formation of the 70S ribosomal complex. The protein is Translation initiation factor IF-2 of Streptococcus thermophilus (strain ATCC BAA-491 / LMD-9).